We begin with the raw amino-acid sequence, 70 residues long: Large ribosomal subunit protein bL31 (70 aa).

This sequence belongs to the bacterial ribosomal protein bL31 family. Type A subfamily. As to quaternary structure, part of the 50S ribosomal subunit.

Functionally, binds the 23S rRNA. The chain is Large ribosomal subunit protein bL31 from Mycoplasma mobile (strain ATCC 43663 / 163K / NCTC 11711) (Mesomycoplasma mobile).